Reading from the N-terminus, the 677-residue chain is Transcription factor IIIB 90 kDa subunit (677 aa).

A TFIIB-type zinc finger spans residues 2–33 (TGRVCRGCGGTDIELDAARGDAVCTACGSVLE). Residues Cys-6, Cys-9, Cys-25, and Cys-28 each coordinate Zn(2+). 2 consecutive repeat copies span residues 91 to 172 (RHIH…LLAR) and 185 to 269 (LYIP…EFED). 2 disordered regions span residues 340 to 368 (KGGL…TEDE) and 385 to 413 (LLGG…SLLD). Residue Thr-365 is modified to Phosphothreonine. The residue at position 450 (Ser-450) is a Phosphoserine. 2 disordered regions span residues 501–521 (YKEH…ASTA) and 544–653 (RGLS…EDGE). Ser-553 carries the phosphoserine modification. Residues 640–653 (EEADEEEPDEEDGE) show a composition bias toward acidic residues.

This sequence belongs to the TFIIB family. As to quaternary structure, TFIIIB comprises at least the TATA-binding protein (TBP) and the B-related factor 1 (BRF1/TFIIIB90). Interacts with BDP1. Interacts with MAF1.

The protein localises to the nucleus. General activator of RNA polymerase which utilizes different TFIIIB complexes at structurally distinct promoters. The isoform 1 is involved in the transcription of tRNA, adenovirus VA1, 7SL and 5S RNA. Isoform 2 is required for transcription of the U6 promoter. This Homo sapiens (Human) protein is Transcription factor IIIB 90 kDa subunit (BRF1).